The chain runs to 292 residues: Tetratricopeptide repeat protein 1 (292 aa).

Composition is skewed to basic and acidic residues over residues 1–12 and 47–64; these read MEEKSEDCKVPE and KAAE…ECFH. The tract at residues 1–125 is disordered; the sequence is MEEKSEDCKV…SAKLKEEGNE (125 aa). Acidic residues predominate over residues 88–98; the sequence is SSSELDEEYLI. The residue at position 90 (Ser90) is a Phosphoserine. A compositionally biased stretch (basic and acidic residues) spans 99–125; that stretch reads ELEKNMPEEEKQKRREESAKLKEEGNE. TPR repeat units lie at residues 116–149, 155–188, and 189–222; these read SAKL…CPAC, SVLF…NPTY, and IRAI…DPSV.

Interacts with the GAP domain of NF1. Interacts (via TPR repeats) with HSP90AA1 and HSPA8.

This Mus musculus (Mouse) protein is Tetratricopeptide repeat protein 1 (Ttc1).